Consider the following 392-residue polypeptide: Large ribosomal subunit protein uL3 (392 aa).

This sequence belongs to the universal ribosomal protein uL3 family.

The protein localises to the cytoplasm. The L3 protein is a component of the large subunit of cytoplasmic ribosomes. The protein is Large ribosomal subunit protein uL3 (rpl3) of Aspergillus fumigatus (strain ATCC MYA-4609 / CBS 101355 / FGSC A1100 / Af293) (Neosartorya fumigata).